Consider the following 559-residue polypeptide: Dihydroxy-acid dehydratase (559 aa).

C49 contacts [2Fe-2S] cluster. D81 is a Mg(2+) binding site. C122 is a [2Fe-2S] cluster binding site. Mg(2+)-binding residues include D123 and K124. K124 carries the post-translational modification N6-carboxylysine. A [2Fe-2S] cluster-binding site is contributed by C194. E446 provides a ligand contact to Mg(2+). S472 acts as the Proton acceptor in catalysis.

It belongs to the IlvD/Edd family. Homodimer. It depends on [2Fe-2S] cluster as a cofactor. Mg(2+) serves as cofactor.

It carries out the reaction (2R)-2,3-dihydroxy-3-methylbutanoate = 3-methyl-2-oxobutanoate + H2O. The enzyme catalyses (2R,3R)-2,3-dihydroxy-3-methylpentanoate = (S)-3-methyl-2-oxopentanoate + H2O. The protein operates within amino-acid biosynthesis; L-isoleucine biosynthesis; L-isoleucine from 2-oxobutanoate: step 3/4. Its pathway is amino-acid biosynthesis; L-valine biosynthesis; L-valine from pyruvate: step 3/4. Functions in the biosynthesis of branched-chain amino acids. Catalyzes the dehydration of (2R,3R)-2,3-dihydroxy-3-methylpentanoate (2,3-dihydroxy-3-methylvalerate) into 2-oxo-3-methylpentanoate (2-oxo-3-methylvalerate) and of (2R)-2,3-dihydroxy-3-methylbutanoate (2,3-dihydroxyisovalerate) into 2-oxo-3-methylbutanoate (2-oxoisovalerate), the penultimate precursor to L-isoleucine and L-valine, respectively. The polypeptide is Dihydroxy-acid dehydratase (Prochlorococcus marinus (strain MIT 9515)).